Consider the following 417-residue polypeptide: MDVERLQEALKDFEKRGKKEVCPVLDQFLCHVAKTGETMIQWSQFKGYFIFKLEKVMDDFRTSAPEPRGPPNPNVEYIPFDEMKERILKIVTGFNGIPFTIQRLCELLTDPRRNYTGTDKFLRGVEKNVMVVSCVYPSSEKNNSSSLNRMNGVMFPGNSPSYTERSNINGPGTPRPLNRPKVSLSAPMTTNGLPESTDSKEANLQQNEEKSHSDSSTSESEVSSVSPLKNKHPDEDAVEAEGHEVKRLRFDKEGEVRETASQTTSSEISSAVVGETETSSSSQDKDKDSRCTRQHCTEEDEEEDEEEEEESFMTSREMIPERKNQEKESDDALTVNEETSEENNQMEESDVSQAEKDLLHSEGSENEGPVSNDSSDCHETEELVGSNSSKTGEILSESSMENDDEATEVTDEPMEQD.

Polar residues-rich tracts occupy residues 140–149 (EKNNSSSLNR), 158–170 (NSPSYTERSNING), and 186–196 (APMTTNGLPES). Residues 140–417 (EKNNSSSLNR…EVTDEPMEQD (278 aa)) form a disordered region. Position 159 is a phosphoserine (Ser-159). A compositionally biased stretch (basic and acidic residues) spans 197-213 (TDSKEANLQQNEEKSHS). Low complexity predominate over residues 214 to 226 (DSSTSESEVSSVS). Ser-226 bears the Phosphoserine mark. A compositionally biased stretch (basic and acidic residues) spans 231–258 (KHPDEDAVEAEGHEVKRLRFDKEGEVRE). Residues 259–269 (TASQTTSSEIS) are compositionally biased toward polar residues. Residues 283–297 (QDKDKDSRCTRQHCT) show a composition bias toward basic and acidic residues. Residues 298–311 (EEDEEEDEEEEEES) are compositionally biased toward acidic residues. Residues 318–327 (MIPERKNQEK) show a composition bias toward basic and acidic residues. Over residues 338 to 350 (ETSEENNQMEESD) the composition is skewed to acidic residues. Positions 353-363 (QAEKDLLHSEG) are enriched in basic and acidic residues. Polar residues predominate over residues 385 to 399 (GSNSSKTGEILSESS). Residues 400–417 (MENDDEATEVTDEPMEQD) are compositionally biased toward acidic residues.

Belongs to the PPP4R2 family. Serine/threonine-protein phosphatase 4 (PP4) occurs in different assemblies of the catalytic and one or more regulatory subunits. Component of the PP4 complexes PPP4C-PPP4R2, PPP4C-PPP4R2-PPP4R3A and PPP4C-PPP4R2-PPP4R3B. The PPP4C-PPP4R2 complex appears to be a tetramer composed of 2 molecules of PPP4C and 2 molecules of PPP4R2. Interacts with DDX20/GEMIN3 and GEMIN4. Interacts with RPA2; this DNA damage-dependent interaction recruits PPP4C leading to RPA2 dephosphorylation.

The protein localises to the cytoplasm. Its subcellular location is the cytoskeleton. It localises to the microtubule organizing center. The protein resides in the centrosome. It is found in the nucleus. In terms of biological role, regulatory subunit of serine/threonine-protein phosphatase 4 (PP4). May regulate the activity of PPP4C at centrosomal microtubule organizing centers. Its interaction with the SMN complex leads to enhance the temporal localization of snRNPs, suggesting a role of PPP4C in maturation of spliceosomal snRNPs. The PPP4C-PPP4R2-PPP4R3A PP4 complex specifically dephosphorylates H2AX phosphorylated on 'Ser-140' (gamma-H2AX) generated during DNA replication and required for DNA double strand break repair. Mediates RPA2 dephosphorylation by recruiting PPP4C to RPA2 in a DNA damage-dependent manner. RPA2 dephosphorylation is required for the efficient RPA2-mediated recruitment of RAD51 to chromatin following double strand breaks, an essential step for DNA repair. The polypeptide is Serine/threonine-protein phosphatase 4 regulatory subunit 2 (PPP4R2) (Pongo abelii (Sumatran orangutan)).